A 120-amino-acid polypeptide reads, in one-letter code: Large ribosomal subunit protein bL12 (120 aa).

It belongs to the bacterial ribosomal protein bL12 family. In terms of assembly, homodimer. Part of the ribosomal stalk of the 50S ribosomal subunit. Forms a multimeric L10(L12)X complex, where L10 forms an elongated spine to which 2 to 4 L12 dimers bind in a sequential fashion. Binds GTP-bound translation factors.

Functionally, forms part of the ribosomal stalk which helps the ribosome interact with GTP-bound translation factors. Is thus essential for accurate translation. This is Large ribosomal subunit protein bL12 from Aeromonas salmonicida (strain A449).